We begin with the raw amino-acid sequence, 732 residues long: Ubiquitin carboxyl-terminal hydrolase 21 (732 aa).

Over residues 1–10 (MAEFSDPPPS) the composition is skewed to pro residues. Residues 1 to 111 (MAEFSDPPPS…ISPVSNNNHL (111 aa)) form a disordered region. 2 stretches are compositionally biased toward polar residues: residues 11 to 31 (NLSSSHKLTKPNQTLDESSPT) and 38 to 53 (VTNSLSLSSPIRQIQA). Positions 55-69 (SPAKPDGSSSSPPDK) are enriched in low complexity. One can recognise a USP domain in the interval 163 to 469 (AGLYNSGNTC…PAYILFYARE (307 aa)). The Nucleophile role is filled by Cys172. His428 functions as the Proton acceptor in the catalytic mechanism. Residues 534-732 (KEEVFHSAES…SSNMRRSIKL (199 aa)) are disordered. A compositionally biased stretch (low complexity) spans 540–551 (SAESSNNEDSSA). Basic and acidic residues predominate over residues 583-609 (AYIDKSEKPFAETSQPKEPKPFADRAS). A compositionally biased stretch (basic residues) spans 719–732 (KKKKSSNMRRSIKL).

It belongs to the peptidase C19 family.

It catalyses the reaction Thiol-dependent hydrolysis of ester, thioester, amide, peptide and isopeptide bonds formed by the C-terminal Gly of ubiquitin (a 76-residue protein attached to proteins as an intracellular targeting signal).. Functionally, recognizes and hydrolyzes the peptide bond at the C-terminal Gly of ubiquitin. Involved in the processing of poly-ubiquitin precursors as well as that of ubiquitinated proteins. This is Ubiquitin carboxyl-terminal hydrolase 21 (UBP21) from Arabidopsis thaliana (Mouse-ear cress).